Here is an 87-residue protein sequence, read N- to C-terminus: Small ribosomal subunit protein bS20 (87 aa).

The interval 1–26 (MANTAQAKKRVRQNIKQRERNSGLRS) is disordered.

This sequence belongs to the bacterial ribosomal protein bS20 family.

Binds directly to 16S ribosomal RNA. This chain is Small ribosomal subunit protein bS20, found in Nitrosomonas eutropha (strain DSM 101675 / C91 / Nm57).